Here is a 946-residue protein sequence, read N- to C-terminus: Bifunctional glutamine synthetase adenylyltransferase/adenylyl-removing enzyme (946 aa).

Positions 1-440 (MKPLSSPLQQ…VFNELIGDDE (440 aa)) are adenylyl removase. The tract at residues 449–946 (SEQWRELWQD…ASWQKWLVEE (498 aa)) is adenylyl transferase.

This sequence belongs to the GlnE family. Mg(2+) is required as a cofactor.

It catalyses the reaction [glutamine synthetase]-O(4)-(5'-adenylyl)-L-tyrosine + phosphate = [glutamine synthetase]-L-tyrosine + ADP. The catalysed reaction is [glutamine synthetase]-L-tyrosine + ATP = [glutamine synthetase]-O(4)-(5'-adenylyl)-L-tyrosine + diphosphate. Functionally, involved in the regulation of glutamine synthetase GlnA, a key enzyme in the process to assimilate ammonia. When cellular nitrogen levels are high, the C-terminal adenylyl transferase (AT) inactivates GlnA by covalent transfer of an adenylyl group from ATP to specific tyrosine residue of GlnA, thus reducing its activity. Conversely, when nitrogen levels are low, the N-terminal adenylyl removase (AR) activates GlnA by removing the adenylyl group by phosphorolysis, increasing its activity. The regulatory region of GlnE binds the signal transduction protein PII (GlnB) which indicates the nitrogen status of the cell. The chain is Bifunctional glutamine synthetase adenylyltransferase/adenylyl-removing enzyme from Escherichia coli (strain K12 / MC4100 / BW2952).